The chain runs to 2522 residues: Neurogenic locus notch homolog protein 1 (2522 aa).

The signal sequence occupies residues 1 to 19 (MYRIGLLVLIWSLLGLAQG). 4 EGF-like domains span residues 20–57 (LRCTQTAEMCLNGGRCEMTPGGTGVCLCSSSYFGERCQ), 58–99 (YPNP…KVCL), 102–140 (VDNACVNNPCRNGGTCELLSSVSDYRCRCPPGWTGDSCQ), and 141–177 (QADPCASNPCANGGKCLPFETQYICKCPSGFHGATCK). Residues 20-1730 (LRCTQTAEMC…ETAKPPPPLY (1711 aa)) are Extracellular-facing. 33 disulfides stabilise this stretch: cysteine 22-cysteine 35, cysteine 29-cysteine 45, cysteine 47-cysteine 56, cysteine 62-cysteine 74, cysteine 68-cysteine 87, cysteine 89-cysteine 98, cysteine 106-cysteine 117, cysteine 111-cysteine 128, cysteine 130-cysteine 139, cysteine 145-cysteine 156, cysteine 150-cysteine 165, cysteine 167-cysteine 176, cysteine 183-cysteine 194, cysteine 188-cysteine 203, cysteine 205-cysteine 214, cysteine 221-cysteine 232, cysteine 226-cysteine 242, cysteine 244-cysteine 253, cysteine 260-cysteine 271, cysteine 265-cysteine 280, cysteine 282-cysteine 291, cysteine 298-cysteine 311, cysteine 305-cysteine 320, cysteine 322-cysteine 331, cysteine 338-cysteine 349, cysteine 343-cysteine 358, cysteine 360-cysteine 369, cysteine 375-cysteine 386, cysteine 380-cysteine 397, cysteine 399-cysteine 408, cysteine 415-cysteine 428, cysteine 422-cysteine 437, and cysteine 439-cysteine 448. The EGF-like 5; calcium-binding domain maps to 179-215 (DINECSQNPCRNGGQCLNEFGSYRCNCQNRFTGRNCE). Positions 217-254 (PYVPCNPSPCLNGGTCRQTDDTSYECTCLPGFSGQNCE) constitute an EGF-like 6 domain. Threonine 231 is a glycosylation site (O-linked (Fuc...) threonine; alternate). O-linked (GalNAc...) threonine; alternate glycosylation is present at threonine 231. An EGF-like 7; calcium-binding domain is found at 256-292 (NIDDCPSNNCRNGGTCVDGVNTYNCQCPPDWTGQYCT). The region spanning 294–332 (DVDECQLMPNACQNGGTCHNTYGGYNCVCVNGWTGEDCS) is the EGF-like 8; calcium-binding domain. One can recognise an EGF-like 9; calcium-binding domain in the interval 334 to 370 (NIDDCANAACHSGATCHDRVASFFCECPHGRTGLLCH). Positions 371 to 409 (LDNACISNPCNEGSNCDTNPVNGKAICTCPPGYTGPACN) constitute an EGF-like 10 domain. The region spanning 411–449 (DVDECSLGANPCEHGGRCTNTLGSFQCNCPQGYAGPRCE) is the EGF-like 11; calcium-binding domain. Residues threonine 431 and serine 434 each coordinate Ca(2+). Serine 434 is a glycosylation site (O-linked (Glc...) serine). Residues aspartate 451, valine 452, and glutamate 454 each contribute to the Ca(2+) site. An EGF-like 12; calcium-binding domain is found at 451–487 (DVNECLSNPCQNDATCLDQIGEFQCICMPGYEGLYCE). 3 disulfide bridges follow: cysteine 455–cysteine 466, cysteine 460–cysteine 475, and cysteine 477–cysteine 486. Residue serine 457 is glycosylated (O-linked (Glc...) serine). O-linked (Fuc...) threonine glycosylation is present at threonine 465. Aspartate 468 and glutamine 469 together coordinate Ca(2+). The Ca(2+) site is built by asparagine 489, isoleucine 490, and glutamate 492. The region spanning 489–525 (NIDECASNPCLHNGKCVDKINEFHCECPTGFNGNLCQ) is the EGF-like 13; calcium-binding domain. 75 cysteine pairs are disulfide-bonded: cysteine 493–cysteine 504, cysteine 498–cysteine 513, cysteine 515–cysteine 524, cysteine 531–cysteine 542, cysteine 536–cysteine 551, cysteine 553–cysteine 562, cysteine 569–cysteine 579, cysteine 574–cysteine 588, cysteine 590–cysteine 599, cysteine 606–cysteine 617, cysteine 611–cysteine 626, cysteine 628–cysteine 637, cysteine 644–cysteine 654, cysteine 649–cysteine 663, cysteine 665–cysteine 674, cysteine 681–cysteine 692, cysteine 686–cysteine 701, cysteine 703–cysteine 712, cysteine 719–cysteine 729, cysteine 724–cysteine 738, cysteine 740–cysteine 749, cysteine 756–cysteine 767, cysteine 761–cysteine 776, cysteine 778–cysteine 787, cysteine 794–cysteine 805, cysteine 799–cysteine 814, cysteine 816–cysteine 825, cysteine 832–cysteine 843, cysteine 837–cysteine 854, cysteine 856–cysteine 865, cysteine 872–cysteine 883, cysteine 877–cysteine 892, cysteine 894–cysteine 903, cysteine 910–cysteine 921, cysteine 915–cysteine 930, cysteine 932–cysteine 941, cysteine 948–cysteine 959, cysteine 953–cysteine 968, cysteine 970–cysteine 979, cysteine 986–cysteine 997, cysteine 991–cysteine 1006, cysteine 1008–cysteine 1017, cysteine 1024–cysteine 1035, cysteine 1029–cysteine 1044, cysteine 1046–cysteine 1055, cysteine 1062–cysteine 1073, cysteine 1067–cysteine 1082, cysteine 1084–cysteine 1093, cysteine 1100–cysteine 1121, cysteine 1115–cysteine 1130, cysteine 1132–cysteine 1141, cysteine 1148–cysteine 1159, cysteine 1153–cysteine 1168, cysteine 1170–cysteine 1179, cysteine 1186–cysteine 1197, cysteine 1191–cysteine 1206, cysteine 1208–cysteine 1217, cysteine 1224–cysteine 1243, cysteine 1237–cysteine 1252, cysteine 1254–cysteine 1263, cysteine 1270–cysteine 1283, cysteine 1275–cysteine 1292, cysteine 1294–cysteine 1303, cysteine 1310–cysteine 1321, cysteine 1315–cysteine 1333, cysteine 1335–cysteine 1344, cysteine 1351–cysteine 1362, cysteine 1356–cysteine 1371, cysteine 1373–cysteine 1382, cysteine 1390–cysteine 1401, cysteine 1395–cysteine 1412, cysteine 1414–cysteine 1423, cysteine 1447–cysteine 1470, cysteine 1452–cysteine 1465, and cysteine 1461–cysteine 1477. O-linked (Glc...) serine glycosylation is present at serine 495. Residues aspartate 506 and lysine 507 each coordinate Ca(2+). One can recognise an EGF-like 14; calcium-binding domain in the interval 527–563 (DVDECASTPCKNGAKCLDGPNSYTCQCTEGFTGRHCE). The EGF-like 15; calcium-binding domain occupies 565–600 (DINECIPDPCHYGTCKDGIATFTCLCRPGYTGRLCD). One can recognise an EGF-like 16; calcium-binding domain in the interval 602–638 (DINECLSQPCQNGGQCTDRENGYICTCPKGTTGVNCE). Positions 640 to 675 (NLDDCASNPCDYGKCIDKIDGYECTCEPGYTGKMCN) constitute an EGF-like 17; calcium-binding domain. The region spanning 677–713 (NIDECASNPCRNGGTCKDKINGFTCVCPDGYHDHMCL) is the EGF-like 18; calcium-binding domain. One can recognise an EGF-like 19; calcium-binding domain in the interval 715 to 750 (EVNECNSNPCIHGTCHDGINGYKCDCDAGWSGSNCD). Residues 752–788 (NNNECESNPCMNGGTCKDMTGAYICTCRAGFSGPNCQ) enclose the EGF-like 20; calcium-binding domain. The region spanning 790–826 (NINECASNPCLNRGTCIDDVAGYKCNCMLPYTGAICE) is the EGF-like 21; calcium-binding domain. One can recognise an EGF-like 22 domain in the interval 828-866 (VLAPCSGSPCKNGGRCKESEDYETFSCECPPGWQGQTCE). The EGF-like 23; calcium-binding domain occupies 868–904 (DMNECVNRPCRNGAMCQNTNGSYKCNCKPGYAGRHCE). N-linked (GlcNAc...) asparagine glycosylation occurs at asparagine 887. The EGF-like 24; calcium-binding domain occupies 906–942 (DIDDCQPNPCHNGGSCSDGINMFFCNCPAGFRGPKCE). Residues 944–980 (DINECASNPCKNGANCTDCVNSYTCTCQPGFSGIHCE) enclose the EGF-like 25; calcium-binding domain. N-linked (GlcNAc...) asparagine glycosylation is present at asparagine 958. One can recognise an EGF-like 26 domain in the interval 982–1018 (NTPDCTESSCFNGGTCIDGINTFSCQCPPGFTGNYCQ). The 37-residue stretch at 1020–1056 (DINECDSKPCLNGGTCQDSYGAYKCTCPQGYTGLNCQ) folds into the EGF-like 27; calcium-binding domain. 2 EGF-like domains span residues 1058–1094 (LVRWCDSSPCKNGGKCWQTNNFYRCECKSGWTGVYCD) and 1096–1142 (PSVS…SYCE). The region spanning 1144-1180 (QVDECSPNPCQNGATCTDYLGGYSCECVAGYHGVNCS) is the EGF-like 30; calcium-binding domain. Asparagine 1178 carries N-linked (GlcNAc...) asparagine glycosylation. Residues 1182 to 1218 (EINECLSHPCHNGGTCIDLINTYKCSCPRGTQGVHCE) enclose the EGF-like 31; calcium-binding domain. The EGF-like 32; calcium-binding domain maps to 1220–1264 (NVDDCTPFYDSVSLEPKCFNNGKCFDRVGGYNCICPPGFVGERCE). EGF-like domains are found at residues 1266 to 1304 (DVNECLSNPCDPRGTQNCIQLVNDYRCECRQGFTGRRCD), 1306 to 1345 (VVDGCKGLPCRNGGTCAVASNTERGFICKCPPGFDGATCE), 1347 to 1383 (DARTCGNLRCQNGGTCISVLKSSKCVCSEGYTGATCQ), and 1386 to 1424 (VVSPCASRPCYNGGTCQFSPEEPFFQCFCPTNFNGLFCH). O-linked (Fuc...) threonine; alternate glycosylation occurs at threonine 1400. An O-linked (GalNAc...) threonine; alternate glycan is attached at threonine 1400. LNR repeat units lie at residues 1447 to 1487 (CENE…PWKN), 1488 to 1529 (CTQS…CNPL), and 1530 to 1564 (YDQYCRDHFQDGHCDQGCNNAECEWDGLDCDNMPE). Ca(2+)-binding residues include asparagine 1458, aspartate 1473, and aspartate 1476. Asparagine 1487 carries an N-linked (GlcNAc...) asparagine glycan. Disulfide bonds link cysteine 1488–cysteine 1512, cysteine 1494–cysteine 1507, cysteine 1503–cysteine 1519, cysteine 1534–cysteine 1547, and cysteine 1543–cysteine 1559. A Ca(2+)-binding site is contributed by aspartate 1500. N-linked (GlcNAc...) asparagine glycosylation occurs at asparagine 1508. Ca(2+) is bound by residues aspartate 1515, aspartate 1518, aspartate 1540, aspartate 1555, and aspartate 1558. Asparagine 1584 carries N-linked (GlcNAc...) asparagine glycosylation. A helical transmembrane segment spans residues 1731–1751 (AMFSMLVIPLLIIFVIMVVIV). Topologically, residues 1752–2522 (NKKRRREHGQ…QRTHIPEAFK (771 aa)) are cytoplasmic. ANK repeat units lie at residues 1877–1920 (DGFT…QLHN), 1925–1954 (TGETALHLAARYARADAAKRLLESSADANV), 1958–1988 (MGRTPLHAAVAADAQGVFQILIRNRATDLDA), 1992–2021 (DGTTPLILAARLAVEGMVEELINAHADVNA), 2025–2054 (FGKSALHWAAAVNNVDAAAVLLKSSANKDM), and 2058–2087 (KEETPLFLAAREGSYETAKVLLDHYANRDI). Disordered stretches follow at residues 2146-2229 (MKPS…MPLN), 2365-2404 (LMQAQQMQQQQNLQLHQSVQQQQHQNSNATSTHIGSPFCS), and 2449-2522 (LTPP…EAFK). The segment covering 2184–2200 (SLLDSGSSGVLSPVDSL) has biased composition (low complexity). Polar residues predominate over residues 2218–2229 (SPFQQSPSMPLN). Residues 2365 to 2390 (LMQAQQMQQQQNLQLHQSVQQQQHQN) show a composition bias toward low complexity. Composition is skewed to polar residues over residues 2391–2404 (SNATSTHIGSPFCS) and 2449–2469 (LTPPSQHSYSSPMDNTPSHQL). Over residues 2479-2494 (PSPESPDQWSSSSPHS) the composition is skewed to low complexity. The segment covering 2495–2514 (NMSDWSEGISSPPTSMQPQR) has biased composition (polar residues).

This sequence belongs to the NOTCH family. O-glycosylated on the EGF-like domains. Contains both O-linked fucose and O-linked glucose. O-linked glycosylation by galnt11 is involved in determination of left/right symmetry: glycosylation promotes activation of notch1, possibly by promoting cleavage by adam17, modulating the balance between motile and immotile (sensory) cilia at the left-right organiser (LRO). In terms of processing, synthesized in the endoplasmic reticulum as an inactive form which is proteolytically cleaved by a furin-like convertase in the trans-Golgi network before it reaches the plasma membrane to yield an active, ligand-accessible form. Cleavage results in a C-terminal fragment N(TM) and a N-terminal fragment N(EC). Following ligand binding, it is cleaved by adam17 to yield a membrane-associated intermediate fragment called notch extracellular truncation (NEXT). Following endocytosis, this fragment is then cleaved by presenilin dependent gamma-secretase to release a Notch-derived peptide containing the intracellular domain (NICD) from the membrane.

Its subcellular location is the cell membrane. The protein resides in the nucleus. Functionally, functions as a receptor for membrane-bound ligands Jagged-1 (JAG1), Jagged-2 (JAG2) and Delta-1 (DLL1) to regulate cell-fate determination. Upon ligand activation through the released notch intracellular domain (NICD) it forms a transcriptional activator complex with RBPJ/RBPSUH and activates genes of the enhancer of split locus. Affects the implementation of differentiation, proliferation and apoptotic programs. Involved in angiogenesis; negatively regulates endothelial cell proliferation and migration and angiogenic sprouting. Involved in the maturation of both CD4(+) and CD8(+) cells in the thymus. Important for follicular differentiation and possibly cell fate selection within the follicle. During cerebellar development, functions as a receptor for neuronal DNER and is involved in the differentiation of Bergmann glia. Represses neuronal and myogenic differentiation. May play an essential role in postimplantation development, probably in some aspect of cell specification and/or differentiation. May be involved in mesoderm development, somite formation and neurogenesis. Involved in determination of left/right symmetry by modulating the balance between motile and immotile (sensory) cilia at the left-right organiser (LRO). This is Neurogenic locus notch homolog protein 1 (notch1) from Xenopus tropicalis (Western clawed frog).